The primary structure comprises 160 residues: Class B acid phosphatase (160 aa).

The signal sequence occupies residues 1-23 (MRKVTLTLSAIALALSLNGAAMA). Aspartate 69 acts as the Nucleophile in catalysis. Positions 69 and 71 each coordinate Mg(2+). Aspartate 71 acts as the Proton donor in catalysis. Residue 137–138 (TG) coordinates substrate.

The protein belongs to the class B bacterial acid phosphatase family. In terms of assembly, homotetramer. Mg(2+) is required as a cofactor.

Its subcellular location is the periplasm. The enzyme catalyses a phosphate monoester + H2O = an alcohol + phosphate. Its function is as follows. Dephosphorylates several organic phosphate monoesters. Also has a phosphotransferase activity catalyzing the transfer of low-energy phosphate groups from organic phosphate monoesters to free hydroxyl groups of various organic compounds. This Proteus mirabilis protein is Class B acid phosphatase (aphA).